Reading from the N-terminus, the 795-residue chain is Phenylalanine--tRNA ligase beta subunit (795 aa).

The tRNA-binding domain maps to 39–148; the sequence is AGEFTGVKVG…EGTTLGADVR (110 aa). A B5 domain is found at 401–476; the sequence is PKANTVELRR…RIYGYNNIPN (76 aa). Mg(2+) contacts are provided by D454, D460, E463, and E464. In terms of domain architecture, FDX-ACB spans 701–794; that stretch reads SKFPANRRDI…IGEKFSATLR (94 aa).

Belongs to the phenylalanyl-tRNA synthetase beta subunit family. Type 1 subfamily. Tetramer of two alpha and two beta subunits. It depends on Mg(2+) as a cofactor.

The protein localises to the cytoplasm. It carries out the reaction tRNA(Phe) + L-phenylalanine + ATP = L-phenylalanyl-tRNA(Phe) + AMP + diphosphate + H(+). In Aliivibrio fischeri (strain ATCC 700601 / ES114) (Vibrio fischeri), this protein is Phenylalanine--tRNA ligase beta subunit.